Reading from the N-terminus, the 341-residue chain is Glycerol-3-phosphate dehydrogenase [NAD(P)+] 1 (341 aa).

NADPH-binding residues include Ser11, Trp12, Arg32, Arg33, and Lys106. 3 residues coordinate sn-glycerol 3-phosphate: Lys106, Gly137, and Ser139. Position 141 (Ala141) interacts with NADPH. Sn-glycerol 3-phosphate is bound by residues Lys192, Asp245, Ser255, Arg256, and Asn257. Lys192 functions as the Proton acceptor in the catalytic mechanism. Arg256 is a binding site for NADPH. The NADPH site is built by Val280 and Glu282.

Belongs to the NAD-dependent glycerol-3-phosphate dehydrogenase family.

It is found in the cytoplasm. It carries out the reaction sn-glycerol 3-phosphate + NAD(+) = dihydroxyacetone phosphate + NADH + H(+). The enzyme catalyses sn-glycerol 3-phosphate + NADP(+) = dihydroxyacetone phosphate + NADPH + H(+). Its pathway is membrane lipid metabolism; glycerophospholipid metabolism. Catalyzes the reduction of the glycolytic intermediate dihydroxyacetone phosphate (DHAP) to sn-glycerol 3-phosphate (G3P), the key precursor for phospholipid synthesis. This is Glycerol-3-phosphate dehydrogenase [NAD(P)+] 1 from Salinibacter ruber (strain DSM 13855 / M31).